We begin with the raw amino-acid sequence, 370 residues long: Peptidyl-prolyl cis-trans isomerase D (370 aa).

Positions 11-176 constitute a PPIase cyclophilin-type domain; sequence FFDISADGKP…EDWIISDCGE (166 aa). 3 TPR repeats span residues 218 to 251, 269 to 302, and 307 to 340; these read VTTLKDIGTKQLKDGNVAAAYEKYNKASGFLNDY, LSCYLNAALVALKLKDGKKTINAASNALEVEAID, and TKALYRKGMGYLLAKDEESAQKSLEEALQLSPED.

Belongs to the cyclophilin-type PPIase family. PPIase D subfamily.

Its subcellular location is the cytoplasm. It catalyses the reaction [protein]-peptidylproline (omega=180) = [protein]-peptidylproline (omega=0). Functionally, PPIases accelerate the folding of proteins. It catalyzes the cis-trans isomerization of proline imidic peptide bonds in oligopeptides. In Debaryomyces hansenii (strain ATCC 36239 / CBS 767 / BCRC 21394 / JCM 1990 / NBRC 0083 / IGC 2968) (Yeast), this protein is Peptidyl-prolyl cis-trans isomerase D (CPR6).